A 199-amino-acid polypeptide reads, in one-letter code: Probable GTP-binding protein EngB (199 aa).

One can recognise an EngB-type G domain in the interval 28–199 (DLPEIALAGR…ESWDTILEYL (172 aa)). GTP is bound by residues 36–43 (GRSNVGKS), 63–67 (GKTQL), 81–84 (DVPG), 148–151 (TKAD), and 180–182 (FSS). Mg(2+)-binding residues include S43 and T65.

Belongs to the TRAFAC class TrmE-Era-EngA-EngB-Septin-like GTPase superfamily. EngB GTPase family. It depends on Mg(2+) as a cofactor.

Necessary for normal cell division and for the maintenance of normal septation. The sequence is that of Probable GTP-binding protein EngB from Streptococcus equi subsp. equi (strain 4047).